Here is a 159-residue protein sequence, read N- to C-terminus: Ribonuclease H (159 aa).

The RNase H type-1 domain maps to 1–145; the sequence is MTHIRAIYTD…CDLIARRLSR (145 aa). Residues D10, E49, D74, and D137 each coordinate Mg(2+).

This sequence belongs to the RNase H family. In terms of assembly, monomer. Mg(2+) is required as a cofactor.

Its subcellular location is the cytoplasm. The catalysed reaction is Endonucleolytic cleavage to 5'-phosphomonoester.. Endonuclease that specifically degrades the RNA of RNA-DNA hybrids. The sequence is that of Ribonuclease H from Thermosynechococcus vestitus (strain NIES-2133 / IAM M-273 / BP-1).